We begin with the raw amino-acid sequence, 494 residues long: Gabija protein GajB (494 aa).

One can recognise a UvrD-like helicase ATP-binding domain in the interval 1-229 (MSREQIIKDG…YHLTSNFRCC (229 aa)). 17–24 (AGAGSGKT) provides a ligand contact to ATP.

This sequence belongs to the helicase family. In terms of assembly, homodimer. Interacts with GajA; 2 GajB dimers dock at opposite sides of the GajA complex to form a 4:4 GajA-GajB assembly (GajAB). GajAB interacts with Bacillus phage Phi3T Gad1 protein; this interaction forms a 4:4:8 GajAB-Gad1 complex and leads to GajAB inhibition.

In terms of biological role, component of antiviral defense system Gabija type I, composed of GajA and GajB. Expression of Gabija type I in B.subtilis (strain BEST7003) confers resistance to phages phi105, phi29, rho14, SpBeta and SBSphiC. Expression of Gabija type I in E.coli B (strain ATCC 11303) confers resistance to phage T7. May be a helicase or contribute to GajA activation. In Bacillus cereus (strain VD045), this protein is Gabija protein GajB.